Consider the following 102-residue polypeptide: NADH-quinone oxidoreductase subunit K (102 aa).

The next 3 membrane-spanning stretches (helical) occupy residues 5-25 (IAHYLTVSAIMFTVGIFGIFL), 31-51 (IIILMSIELILLSVNLNFVAF), and 66-86 (FILTVAAAEAAIGLAILVVFF).

This sequence belongs to the complex I subunit 4L family. In terms of assembly, NDH-1 is composed of 14 different subunits. Subunits NuoA, H, J, K, L, M, N constitute the membrane sector of the complex.

Its subcellular location is the cell inner membrane. It catalyses the reaction a quinone + NADH + 5 H(+)(in) = a quinol + NAD(+) + 4 H(+)(out). NDH-1 shuttles electrons from NADH, via FMN and iron-sulfur (Fe-S) centers, to quinones in the respiratory chain. The immediate electron acceptor for the enzyme in this species is believed to be ubiquinone. Couples the redox reaction to proton translocation (for every two electrons transferred, four hydrogen ions are translocated across the cytoplasmic membrane), and thus conserves the redox energy in a proton gradient. The protein is NADH-quinone oxidoreductase subunit K of Bartonella bacilliformis (strain ATCC 35685 / KC583 / Herrer 020/F12,63).